Consider the following 709-residue polypeptide: F-box only protein 40 (709 aa).

Residues 53–112 (EHQLLCPLEQVPCLNSEYGCPLSMSRHKLAKHLQVCPASVVCCSMEWNRWPNVDSETTLH) form a TRAF-type zinc finger. A disordered region spans residues 232-280 (TNSSASCESKNKNDSEKEQISSGHNMVEGEGAPKKKEPQENQKQQDVRT). Basic and acidic residues-rich tracts occupy residues 240–250 (SKNKNDSEKEQ) and 262–277 (GAPK…KQQD). The 55-residue stretch at 570-624 (QNSLTSLPLEILKYIAGFLDSVSLAQLSQVSVLMRNICATLLQERGMVLLQWKKK) folds into the F-box domain.

As to quaternary structure, directly interacts with SKP1 and CUL1. Expressed only in heart and skeletal muscle.

Its subcellular location is the cytoplasm. In terms of biological role, probable substrate-recognition component of the SCF (SKP1-CUL1-F-box protein)-type E3 ubiquitin ligase complex that may function in myogenesis. The sequence is that of F-box only protein 40 (FBXO40) from Homo sapiens (Human).